The sequence spans 128 residues: Small ribosomal subunit protein eS8 (128 aa).

The interval 1–37 (MGYFQGNDFRKITGGKKGKHRDKRKFELGSPPTETKL) is disordered. Over residues 13–23 (TGGKKGKHRDK) the composition is skewed to basic residues.

The protein belongs to the eukaryotic ribosomal protein eS8 family. In terms of assembly, part of the 30S ribosomal subunit.

The protein is Small ribosomal subunit protein eS8 of Sulfurisphaera tokodaii (strain DSM 16993 / JCM 10545 / NBRC 100140 / 7) (Sulfolobus tokodaii).